The chain runs to 328 residues: Putative glycosyltransferase 41 (328 aa).

This sequence belongs to the glycosyltransferase group 1 family. Glycosyltransferase 4 subfamily.

The polypeptide is Putative glycosyltransferase 41 (SIFV0041) (Sulfolobus islandicus filamentous virus (isolate Iceland/Hveragerdi) (SIFV)).